A 264-amino-acid polypeptide reads, in one-letter code: Thymidylate synthase (264 aa).

Position 21 (Arg21) interacts with dUMP. His51 serves as a coordination point for (6R)-5,10-methylene-5,6,7,8-tetrahydrofolate. 126–127 (RR) is a dUMP binding site. The active-site Nucleophile is Cys146. Residues 166 to 169 (RSAD), Asn177, and 207 to 209 (HLY) each bind dUMP. Asp169 is a (6R)-5,10-methylene-5,6,7,8-tetrahydrofolate binding site. Ala263 serves as a coordination point for (6R)-5,10-methylene-5,6,7,8-tetrahydrofolate.

This sequence belongs to the thymidylate synthase family. Bacterial-type ThyA subfamily. As to quaternary structure, homodimer.

It is found in the cytoplasm. It carries out the reaction dUMP + (6R)-5,10-methylene-5,6,7,8-tetrahydrofolate = 7,8-dihydrofolate + dTMP. It participates in pyrimidine metabolism; dTTP biosynthesis. Its function is as follows. Catalyzes the reductive methylation of 2'-deoxyuridine-5'-monophosphate (dUMP) to 2'-deoxythymidine-5'-monophosphate (dTMP) while utilizing 5,10-methylenetetrahydrofolate (mTHF) as the methyl donor and reductant in the reaction, yielding dihydrofolate (DHF) as a by-product. This enzymatic reaction provides an intracellular de novo source of dTMP, an essential precursor for DNA biosynthesis. This is Thymidylate synthase from Nitrosomonas europaea (strain ATCC 19718 / CIP 103999 / KCTC 2705 / NBRC 14298).